Consider the following 443-residue polypeptide: Threonine/serine transporter TdcC (443 aa).

A run of 11 helical transmembrane segments spans residues T22–I42, A44–F64, G97–V117, F140–M160, V163–I183, I207–I227, M261–A281, F311–F331, I366–L386, I389–I409, and D423–F443.

This sequence belongs to the amino acid/polyamine transporter 2 family. SdaC/TdcC subfamily.

Its subcellular location is the cell inner membrane. The enzyme catalyses L-threonine(in) + H(+)(in) = L-threonine(out) + H(+)(out). It carries out the reaction L-serine(in) + H(+)(in) = L-serine(out) + H(+)(out). In terms of biological role, involved in the import of threonine and serine into the cell, with the concomitant import of a proton (symport system). The protein is Threonine/serine transporter TdcC of Shigella boydii serotype 18 (strain CDC 3083-94 / BS512).